Consider the following 706-residue polypeptide: Glutamine-dependent NAD(+) synthetase (706 aa).

In terms of domain architecture, CN hydrolase spans 5–275; the sequence is VTVATCALNQ…VEVLTATLDL (271 aa). Glu45 functions as the Proton acceptor; for glutaminase activity in the catalytic mechanism. The active-site For glutaminase activity is Lys114. Residue Cys175 is the Nucleophile; for glutaminase activity of the active site. The interval 325–706 is ligase; it reads YHSPAEEISL…RQRQELDGVD (382 aa). 355-362 provides a ligand contact to ATP; the sequence is PLSGGVDS. Ser357 is an active-site residue.

In the C-terminal section; belongs to the NAD synthetase family. In terms of assembly, homohexamer.

The enzyme catalyses deamido-NAD(+) + L-glutamine + ATP + H2O = L-glutamate + AMP + diphosphate + NAD(+) + H(+). The protein operates within cofactor biosynthesis; NAD(+) biosynthesis; NAD(+) from deamido-NAD(+) (L-Gln route): step 1/1. Its function is as follows. Catalyzes the ATP-dependent amidation of deamido-NAD to form NAD. Uses L-glutamine as a nitrogen source. In Bos taurus (Bovine), this protein is Glutamine-dependent NAD(+) synthetase (NADSYN1).